A 776-amino-acid polypeptide reads, in one-letter code: Microtubule-associated protein tau (776 aa).

Positions 1 to 26 (MAEPRQEFDVMEDHAGTYGLGDRKDQ) are enriched in basic and acidic residues. Positions 1 to 591 (MAEPRQEFDV…PVPMPDLKNV (591 aa)) are disordered. The residue at position 2 (A2) is an N-acetylalanine. Phosphotyrosine is present on residues Y18 and Y29. Residue K44 forms a Glycyl lysine isopeptide (Lys-Gly) (interchain with G-Cter in ubiquitin) linkage. 2 positions are modified to phosphoserine: S46 and S61. Residues 61–71 (SETSDAKSTPT) show a composition bias toward polar residues. T69, T71, and T111 each carry phosphothreonine. 2 stretches are compositionally biased toward basic and acidic residues: residues 179–189 (EGGRHAPELLK) and 207–216 (GGKERPGIKE). The segment covering 217-228 (EVDEDRDVDESS) has biased composition (acidic residues). The span at 314 to 323 (EQAHSEEHLG) shows a compositional bias: basic and acidic residues. A compositionally biased stretch (low complexity) spans 325–340 (AAFPGAPGEGPEAQGP). 2 stretches are compositionally biased toward basic and acidic residues: residues 344-356 (EDTKEADLPEPSE) and 381-393 (KSKDGTGSDDKKA). Residues 442–453 (VSSVTXRTGSSG) show a composition bias toward low complexity. The segment covering 455 to 466 (KEMKLKGADGKT) has biased composition (basic and acidic residues). Residue T470 is modified to Phosphothreonine. The residue at position 472 (R472) is an Omega-N-methylarginine. Position 480 is an N6,N6-dimethyllysine; alternate (K480). An N6-acetyllysine; alternate modification is found at K480. T486, T492, and T498 each carry phosphothreonine. S502, S526, and S530 each carry phosphoserine. Positions 517–528 (KSERGEPPKSGD) are enriched in basic and acidic residues. Residues 529-549 (RSGYSSPGSPGTPGSRSRTPS) show a composition bias toward low complexity. Residue Y532 is modified to Phosphotyrosine. Residues S533, S534, and S537 each carry the phosphoserine modification. Residues T540 and T547 each carry the phosphothreonine modification. The residue at position 549 (S549) is a Phosphoserine. A Phosphothreonine modification is found at T552. At K560 the chain carries N6-acetyllysine. T566 carries the post-translational modification Phosphothreonine. Phosphoserine is present on residues S570 and S572. Tau/MAP repeat units follow at residues 579–609 (QTAPVPMPDLKNVKSKIGSTENLKHQPGGGK), 610–640 (VQIINKKLDLSNVQSKCGSKDNIKHVPGGGS), 641–671 (VQIVYKPVDLSKVTSKCGSLGNIHHKPGGGQ), and 672–703 (VEVKSEKLDFKDRVQSKIGSLDNITHVPGGGN). Residue K589 forms a Glycyl lysine isopeptide (Lys-Gly) (interchain with G-Cter in ubiquitin) linkage. Position 594 is an N6-acetyllysine; alternate (K594). K594 carries the N6-methyllysine; alternate modification. A Glycyl lysine isopeptide (Lys-Gly) (interchain with G-Cter in ubiquitin); alternate cross-link involves residue K594. Position 597 is a phosphoserine (S597). K602 participates in a covalent cross-link: Glycyl lysine isopeptide (Lys-Gly) (interchain with G-Cter in ubiquitin). K616 is subject to N6-acetyllysine; alternate. Residue K616 forms a Glycyl lysine isopeptide (Lys-Gly) (interchain with G-Cter in ubiquitin); alternate linkage. A phosphoserine mark is found at S620 and S624. The residue at position 625 (K625) is an N6-acetyllysine. S628 bears the Phosphoserine mark. K633 is subject to N6-acetyllysine; alternate. K633 participates in a covalent cross-link: Glycyl lysine isopeptide (Lys-Gly) (interchain with G-Cter in ubiquitin); alternate. Phosphoserine is present on S640. An N6,N6-dimethyllysine; alternate modification is found at K646. N6-acetyllysine; alternate occurs at positions 646, 652, and 656. Glycyl lysine isopeptide (Lys-Gly) (interchain with G-Cter in ubiquitin); alternate cross-links involve residues K646, K652, and K656. A Phosphoserine modification is found at S659. An N6-acetyllysine; alternate mark is found at K666, K678, and K682. Glycyl lysine isopeptide (Lys-Gly) (interchain with G-Cter in ubiquitin); alternate cross-links involve residues K666, K678, and K682. An Omega-N-methylarginine modification is found at R684. S687 carries the post-translational modification Phosphoserine. K688 is covalently cross-linked (Glycyl lysine isopeptide (Lys-Gly) (interchain with G-Cter in ubiquitin)). A Phosphoserine modification is found at S691. Position 704 is an N6-acetyllysine; alternate (K704). A Glycyl lysine isopeptide (Lys-Gly) (interchain with G-Cter in ubiquitin); alternate cross-link involves residue K704. K710 is covalently cross-linked (Glycyl lysine isopeptide (Lys-Gly) (interchain with G-Cter in ubiquitin)). An N6-acetyllysine; alternate modification is found at K720. K720 is covalently cross-linked (Glycyl lysine isopeptide (Lys-Gly) (interchain with G-Cter in ubiquitin); alternate). A Phosphotyrosine modification is found at Y729. A phosphoserine mark is found at S731 and S735. A disordered region spans residues 733-752 (VVSGDTSPRHLSNVSSTGSI). Residues 736–751 (GDTSPRHLSNVSSTGS) show a composition bias toward polar residues. The residue at position 738 (T738) is a Phosphothreonine. S739, S744, S751, and S757 each carry phosphoserine. Residue T762 is modified to Phosphothreonine.

Interacts with MARK1, MARK2, MARK3 and MARK4. Interacts with SQSTM1 when polyubiquitinated. Interacts with PSMC2 through SQSTM1. Interacts with FKBP4. Binds to CSNK1D. Interacts with SGK1. Interacts with EPM2A; the interaction dephosphorylates MAPT at Ser-396. Interacts with PIN1. Interacts with LRRK2. Interacts with LRP1, leading to endocytosis; this interaction is reduced in the presence of LRPAP1/RAP. In terms of processing, polyubiquitinated. Requires functional TRAF6 and may provoke SQSTM1-dependent degradation by the proteasome. Phosphorylation at various serine and threonine residues in S-P or T-P motifs by proline-directed protein kinases (PDPK1, CDK1, CDK5, GSK3, MAPK) (a few sites per protein in interphase, more in mitosis), and at serine residues in K-X-G-S motifs by MAP/microtubule affinity-regulating kinase (MARK1, MARK2, MARK3 or MARK4), causing detachment from microtubules, and their disassembly. Phosphorylation at Ser-597 by BRSK1 and BRSK2 in neurons affects ability to bind microtubules and plays a role in neuron polarization. Phosphorylated by PHK. Dephosphorylation at several serine and threonine residues by the serine/threonine phosphatase PPP5C.

It localises to the cytoplasm. Its subcellular location is the cytosol. The protein resides in the cell membrane. It is found in the cytoskeleton. The protein localises to the cell projection. It localises to the axon. Its subcellular location is the dendrite. In terms of biological role, promotes microtubule assembly and stability, and might be involved in the establishment and maintenance of neuronal polarity. The C-terminus binds axonal microtubules while the N-terminus binds neural plasma membrane components, suggesting that tau functions as a linker protein between both. Axonal polarity is predetermined by tau localization (in the neuronal cell) in the domain of the cell body defined by the centrosome. The short isoforms allow plasticity of the cytoskeleton whereas the longer isoforms may preferentially play a role in its stabilization. This chain is Microtubule-associated protein tau (MAPT), found in Hylobates lar (Lar gibbon).